Here is a 475-residue protein sequence, read N- to C-terminus: Ribulose bisphosphate carboxylase large chain (475 aa).

A propeptide spanning residues 1–2 (MS) is cleaved from the precursor. Pro-3 is modified (N-acetylproline). Residue Lys-14 is modified to N6,N6,N6-trimethyllysine. Substrate is bound by residues Asn-123 and Thr-173. Catalysis depends on Lys-175, which acts as the Proton acceptor. Lys-177 contributes to the substrate binding site. Mg(2+)-binding residues include Lys-201, Asp-203, and Glu-204. The residue at position 201 (Lys-201) is an N6-carboxylysine. His-294 functions as the Proton acceptor in the catalytic mechanism. The substrate site is built by Arg-295, His-327, and Ser-379.

Belongs to the RuBisCO large chain family. Type I subfamily. In terms of assembly, heterohexadecamer of 8 large chains and 8 small chains; disulfide-linked. The disulfide link is formed within the large subunit homodimers. Requires Mg(2+) as cofactor. In terms of processing, the disulfide bond which can form in the large chain dimeric partners within the hexadecamer appears to be associated with oxidative stress and protein turnover.

The protein localises to the plastid. It localises to the chloroplast. The catalysed reaction is 2 (2R)-3-phosphoglycerate + 2 H(+) = D-ribulose 1,5-bisphosphate + CO2 + H2O. It catalyses the reaction D-ribulose 1,5-bisphosphate + O2 = 2-phosphoglycolate + (2R)-3-phosphoglycerate + 2 H(+). In terms of biological role, ruBisCO catalyzes two reactions: the carboxylation of D-ribulose 1,5-bisphosphate, the primary event in carbon dioxide fixation, as well as the oxidative fragmentation of the pentose substrate in the photorespiration process. Both reactions occur simultaneously and in competition at the same active site. In Eucalyptus globulus subsp. globulus (Tasmanian blue gum), this protein is Ribulose bisphosphate carboxylase large chain.